We begin with the raw amino-acid sequence, 165 residues long: NAD(P)H-quinone oxidoreductase subunit I, chloroplastic (165 aa).

4Fe-4S ferredoxin-type domains follow at residues 55 to 84 (GRIH…VDWE) and 95 to 124 (KSYS…MTEE). [4Fe-4S] cluster is bound by residues Cys-64, Cys-67, Cys-70, Cys-74, Cys-104, Cys-107, Cys-110, and Cys-114.

This sequence belongs to the complex I 23 kDa subunit family. NDH is composed of at least 16 different subunits, 5 of which are encoded in the nucleus. It depends on [4Fe-4S] cluster as a cofactor.

The protein localises to the plastid. Its subcellular location is the chloroplast thylakoid membrane. It carries out the reaction a plastoquinone + NADH + (n+1) H(+)(in) = a plastoquinol + NAD(+) + n H(+)(out). The enzyme catalyses a plastoquinone + NADPH + (n+1) H(+)(in) = a plastoquinol + NADP(+) + n H(+)(out). Functionally, NDH shuttles electrons from NAD(P)H:plastoquinone, via FMN and iron-sulfur (Fe-S) centers, to quinones in the photosynthetic chain and possibly in a chloroplast respiratory chain. The immediate electron acceptor for the enzyme in this species is believed to be plastoquinone. Couples the redox reaction to proton translocation, and thus conserves the redox energy in a proton gradient. The protein is NAD(P)H-quinone oxidoreductase subunit I, chloroplastic of Psilotum nudum (Whisk fern).